The following is a 214-amino-acid chain: Oxaloacetate tautomerase fahd-1, mitochondrial (214 aa).

The Mg(2+) site is built by glutamate 65, glutamate 67, and aspartate 96.

This sequence belongs to the FAH family. Mg(2+) is required as a cofactor. Requires Mn(2+) as cofactor. As to expression, widely expressed.

It localises to the mitochondrion. The enzyme catalyses oxaloacetate = enol-oxaloacetate. Tautomerase that converts enol-oxaloacetate, a strong inhibitor of succinate dehydrogenase, to the physiological keto form of oxaloacetate. This chain is Oxaloacetate tautomerase fahd-1, mitochondrial, found in Caenorhabditis elegans.